We begin with the raw amino-acid sequence, 196 residues long: Pyridoxal 5'-phosphate synthase subunit PdxT (196 aa).

Position 47-49 (47-49 (GES)) interacts with L-glutamine. Cysteine 79 (nucleophile) is an active-site residue. L-glutamine is bound by residues arginine 106 and 134–135 (IR). Residues histidine 170 and glutamate 172 each act as charge relay system in the active site.

Belongs to the glutaminase PdxT/SNO family. As to quaternary structure, in the presence of PdxS, forms a dodecamer of heterodimers. Only shows activity in the heterodimer.

It catalyses the reaction aldehydo-D-ribose 5-phosphate + D-glyceraldehyde 3-phosphate + L-glutamine = pyridoxal 5'-phosphate + L-glutamate + phosphate + 3 H2O + H(+). The enzyme catalyses L-glutamine + H2O = L-glutamate + NH4(+). It functions in the pathway cofactor biosynthesis; pyridoxal 5'-phosphate biosynthesis. Its function is as follows. Catalyzes the hydrolysis of glutamine to glutamate and ammonia as part of the biosynthesis of pyridoxal 5'-phosphate. The resulting ammonia molecule is channeled to the active site of PdxS. The sequence is that of Pyridoxal 5'-phosphate synthase subunit PdxT from Halalkalibacterium halodurans (strain ATCC BAA-125 / DSM 18197 / FERM 7344 / JCM 9153 / C-125) (Bacillus halodurans).